Consider the following 204-residue polypeptide: General stress protein Ctc (204 aa).

Residues 177–204 are disordered; the sequence is ILPPQQQEAAEVDEEESADAQPEGENEQ. The span at 186–204 shows a compositional bias: acidic residues; the sequence is AEVDEEESADAQPEGENEQ.

The protein belongs to the bacterial ribosomal protein bL25 family. CTC subfamily. As to quaternary structure, part of the ribosome (presumably the 50S subunit) under heat-stress but not control growth conditions. Binds 5S rRNA.

In terms of biological role, not required for exponential growth; probably functions in vegetatively growing cells, maybe required for accurate translation under stress conditions. The chain is General stress protein Ctc from Bacillus subtilis (strain 168).